The sequence spans 208 residues: MLRTIFLLSLLFALSNASVQDFCVANLKRAETPAGYPCIRPIHVKATDFVFSGLGTPGNTTNIINAAVTPAFAAQFPGLNGLGLSTARLDLAPKGVIPMHTHPGASEVLFVLTGSITAGFVSSANAVYVQTLKPGQVMVFPQGLLHFQINAGKSSASAVVTFNSANPGLQILDFALFANSLPTELVVGTTFLDATTVKKLKGVLGGTG.

Residues 1–18 form the signal peptide; the sequence is MLRTIFLLSLLFALSNAS. The cysteines at positions 23 and 38 are disulfide-linked. Residues 52–198 form the Cupin type-1 domain; sequence SGLGTPGNTT…TTFLDATTVK (147 aa). N59 carries N-linked (GlcNAc...) asparagine glycosylation. Mn(2+)-binding residues include H100, H102, E107, and H146.

This sequence belongs to the germin family. In terms of assembly, may not form oligomer. As to expression, expressed during germination, and also in green shoots, etiolated seedlings and whole seedlings.

Its subcellular location is the secreted. The protein resides in the extracellular space. It is found in the apoplast. Functionally, may play a role in plant defense. Probably has no oxalate oxidase activity even if the active site is conserved. This Arabidopsis thaliana (Mouse-ear cress) protein is Germin-like protein subfamily 3 member 1 (GLP1).